A 326-amino-acid chain; its full sequence is ELMO domain-containing protein 1 (326 aa).

One can recognise an ELMO domain in the interval Gln133–Leu306.

Acts as a GTPase-activating protein (GAP) toward guanine nucleotide exchange factors like ARL2, ARL3, ARF1 and ARF6, but not for GTPases outside the Arf family. The sequence is that of ELMO domain-containing protein 1 (Elmod1) from Mus musculus (Mouse).